The following is a 545-amino-acid chain: CTP synthase (545 aa).

Positions M1–L266 are amidoligase domain. S14 is a CTP binding site. S14 is a binding site for UTP. ATP is bound by residues S15–I20 and D72. Positions 72 and 140 each coordinate Mg(2+). Residues D147–E149, K187–Q192, and K223 each bind CTP. Residues K187–Q192 and K223 each bind UTP. Position 239–241 (K239–V241) interacts with ATP. Residues T291–K542 form the Glutamine amidotransferase type-1 domain. G352 serves as a coordination point for L-glutamine. The Nucleophile; for glutamine hydrolysis role is filled by C379. L-glutamine contacts are provided by residues L380–Q383, E403, and R470. Residues H515 and E517 contribute to the active site.

This sequence belongs to the CTP synthase family. Homotetramer.

It carries out the reaction UTP + L-glutamine + ATP + H2O = CTP + L-glutamate + ADP + phosphate + 2 H(+). It catalyses the reaction L-glutamine + H2O = L-glutamate + NH4(+). The catalysed reaction is UTP + NH4(+) + ATP = CTP + ADP + phosphate + 2 H(+). It functions in the pathway pyrimidine metabolism; CTP biosynthesis via de novo pathway; CTP from UDP: step 2/2. Its activity is regulated as follows. Allosterically activated by GTP, when glutamine is the substrate; GTP has no effect on the reaction when ammonia is the substrate. The allosteric effector GTP functions by stabilizing the protein conformation that binds the tetrahedral intermediate(s) formed during glutamine hydrolysis. Inhibited by the product CTP, via allosteric rather than competitive inhibition. Its function is as follows. Catalyzes the ATP-dependent amination of UTP to CTP with either L-glutamine or ammonia as the source of nitrogen. Regulates intracellular CTP levels through interactions with the four ribonucleotide triphosphates. The sequence is that of CTP synthase from Haemophilus influenzae (strain ATCC 51907 / DSM 11121 / KW20 / Rd).